The primary structure comprises 158 residues: 6,7-dimethyl-8-ribityllumazine synthase (158 aa).

5-amino-6-(D-ribitylamino)uracil-binding positions include F22, A57–E59, and A81–I83. G86 to T87 contributes to the (2S)-2-hydroxy-3-oxobutyl phosphate binding site. The active-site Proton donor is the H89. F114 is a binding site for 5-amino-6-(D-ribitylamino)uracil. R128 is a (2S)-2-hydroxy-3-oxobutyl phosphate binding site.

It belongs to the DMRL synthase family. In terms of assembly, forms an icosahedral capsid composed of 60 subunits, arranged as a dodecamer of pentamers.

It catalyses the reaction (2S)-2-hydroxy-3-oxobutyl phosphate + 5-amino-6-(D-ribitylamino)uracil = 6,7-dimethyl-8-(1-D-ribityl)lumazine + phosphate + 2 H2O + H(+). The protein operates within cofactor biosynthesis; riboflavin biosynthesis; riboflavin from 2-hydroxy-3-oxobutyl phosphate and 5-amino-6-(D-ribitylamino)uracil: step 1/2. In terms of biological role, catalyzes the formation of 6,7-dimethyl-8-ribityllumazine by condensation of 5-amino-6-(D-ribitylamino)uracil with 3,4-dihydroxy-2-butanone 4-phosphate. This is the penultimate step in the biosynthesis of riboflavin. In Pseudoalteromonas atlantica (strain T6c / ATCC BAA-1087), this protein is 6,7-dimethyl-8-ribityllumazine synthase.